We begin with the raw amino-acid sequence, 254 residues long: MVPGRVLMWGALALTTVMSACGGEDIAADHVASYGLNVYQSYGPRGYFTHEFDGDEQFYVDLEKKETVWRLPLFSEFTSFDPQGALRNIATLKHNLNIVTKRSNNTAAVNKVPEVTVFSKSPVILGQPNTLICHVDSIFPPVINITWLKNGHSVKGFSETSFLSKNDHSFLKISYLTFLPSDDDFYDCKVEHWGLDKPLLKHWEPEIPAPMSELTETVVCALGLIVGLVGIVVGTVFIIQGLRSGGPSRHQGSL.

Positions 1–23 (MVPGRVLMWGALALTTVMSACGG) are cleaved as a signal peptide. Positions 24 to 120 (EDIAADHVAS…KVPEVTVFSK (97 aa)) are alpha-1. Residues 24–216 (EDIAADHVAS…IPAPMSELTE (193 aa)) lie on the Extracellular side of the membrane. 2 N-linked (GlcNAc...) asparagine glycosylation sites follow: N104 and N144. The 92-residue stretch at 113–204 (PEVTVFSKSP…LDKPLLKHWE (92 aa)) folds into the Ig-like C1-type domain. The tract at residues 121–203 (SPVILGQPNT…GLDKPLLKHW (83 aa)) is alpha-2. C133 and C188 are joined by a disulfide. The connecting peptide stretch occupies residues 204–216 (EPEIPAPMSELTE). A helical membrane pass occupies residues 217-239 (TVVCALGLIVGLVGIVVGTVFII). Residues 240–254 (QGLRSGGPSRHQGSL) are Cytoplasmic-facing.

The protein belongs to the MHC class II family.

Its subcellular location is the membrane. The sequence is that of SLA class II histocompatibility antigen, DQ haplotype C alpha chain from Sus scrofa (Pig).